The chain runs to 261 residues: Kallikrein 1-related peptidase b5 (261 aa).

Residues 1–18 form the signal peptide; it reads MWFLILFLALSLGGIDAA. The propeptide at 19-24 is activation peptide; it reads PPVQSR. The Peptidase S1 domain maps to 25–258; it reads IFGGFNCEKN…FNSWIKDTIA (234 aa). 5 disulfide bridges follow: Cys31–Cys173, Cys50–Cys66, Cys152–Cys219, Cys184–Cys198, and Cys209–Cys234. The Charge relay system role is filled by His65. N-linked (GlcNAc...) asparagine glycosylation occurs at Asn102. Residue Asp120 is the Charge relay system of the active site. The active-site Charge relay system is the Ser213.

The protein belongs to the peptidase S1 family. Kallikrein subfamily.

It carries out the reaction Preferential cleavage of Arg-|-Xaa bonds in small molecule substrates. Highly selective action to release kallidin (lysyl-bradykinin) from kininogen involves hydrolysis of Met-|-Xaa or Leu-|-Xaa.. Its function is as follows. Glandular kallikreins cleave Met-Lys and Arg-Ser bonds in kininogen to release Lys-bradykinin. This is Kallikrein 1-related peptidase b5 (Klk1b5) from Mus musculus (Mouse).